Consider the following 313-residue polypeptide: Porphobilinogen deaminase (313 aa).

The residue at position 242 (Cys242) is an S-(dipyrrolylmethanemethyl)cysteine.

The protein belongs to the HMBS family. Monomer. The cofactor is dipyrromethane.

It catalyses the reaction 4 porphobilinogen + H2O = hydroxymethylbilane + 4 NH4(+). The protein operates within porphyrin-containing compound metabolism; protoporphyrin-IX biosynthesis; coproporphyrinogen-III from 5-aminolevulinate: step 2/4. Functionally, tetrapolymerization of the monopyrrole PBG into the hydroxymethylbilane pre-uroporphyrinogen in several discrete steps. The chain is Porphobilinogen deaminase from Yersinia pseudotuberculosis serotype O:1b (strain IP 31758).